The primary structure comprises 837 residues: Mannosyl-oligosaccharide glucosidase (837 aa).

The segment covering 1–10 has biased composition (basic residues); sequence MARGERRRRA. The Cytoplasmic segment spans residues 1-38; sequence MARGERRRRAVPAEGVRTAERAARGGPGRRDGRGGGPR. A disordered region spans residues 1-39; it reads MARGERRRRAVPAEGVRTAERAARGGPGRRDGRGGGPRS. The Endoplasmic reticulum targeting motif lies at 3–9; it reads RGERRRR. The segment covering 17–33 has biased composition (basic and acidic residues); it reads RTAERAARGGPGRRDGR. Residues 39–59 traverse the membrane as a helical; Signal-anchor for type II membrane protein segment; sequence STAGGVALAVVVLSLALGMSG. Topologically, residues 60–837 are lumenal; sequence RWVLAWYRAR…LVLLAMAEDY (778 aa). Residues 76–137 form a required for endoplasmic reticulum targeting region; that stretch reads SAPPVLPADS…PGTPKLRHTC (62 aa). The Proton donor role is filled by aspartate 583. Asparagine 657 carries an N-linked (GlcNAc...) asparagine glycan. The active-site Proton acceptor is the glutamate 807.

The protein belongs to the glycosyl hydrolase 63 family.

The protein localises to the endoplasmic reticulum membrane. The catalysed reaction is N(4)-(alpha-D-Glc-(1-&gt;2)-alpha-D-Glc-(1-&gt;3)-alpha-D-Glc-(1-&gt;3)-alpha-D-Man-(1-&gt;2)-alpha-D-Man-(1-&gt;2)-alpha-D-Man-(1-&gt;3)-[alpha-D-Man-(1-&gt;2)-alpha-D-Man-(1-&gt;3)-[alpha-D-Man-(1-&gt;2)-alpha-D-Man-(1-&gt;6)]-alpha-D-Man-(1-&gt;6)]-beta-D-Man-(1-&gt;4)-beta-D-GlcNAc-(1-&gt;4)-beta-D-GlcNAc)-L-asparaginyl-[protein] + H2O = N(4)-(alpha-D-Glc-(1-&gt;3)-alpha-D-Glc-(1-&gt;3)-alpha-D-Man-(1-&gt;2)-alpha-D-Man-(1-&gt;2)-alpha-D-Man-(1-&gt;3)-[alpha-D-Man-(1-&gt;2)-alpha-D-Man-(1-&gt;3)-[alpha-D-Man-(1-&gt;2)-alpha-D-Man-(1-&gt;6)]-alpha-D-Man-(1-&gt;6)]-beta-D-Man-(1-&gt;4)-beta-D-GlcNAc-(1-&gt;4)-beta-D-GlcNAc)-L-asparaginyl-[protein] + beta-D-glucose. It participates in glycan metabolism; N-glycan degradation. Inhibited by 1-deoxynojirimycin (40% inhibition) and N,N-dimethyl-deoxynojirimycin (85% inhibition). In terms of biological role, in the context of N-glycan degradation, cleaves the distal alpha 1,2-linked glucose residue from the Glc(3)Man(9)GlcNAc(2) oligosaccharide precursor in a highly specific manner. The chain is Mannosyl-oligosaccharide glucosidase from Homo sapiens (Human).